A 459-amino-acid chain; its full sequence is UDP-N-acetylmuramoylalanine--D-glutamate ligase (459 aa).

ATP is bound at residue 119–125 (GTNGKTT).

This sequence belongs to the MurCDEF family.

Its subcellular location is the cytoplasm. It catalyses the reaction UDP-N-acetyl-alpha-D-muramoyl-L-alanine + D-glutamate + ATP = UDP-N-acetyl-alpha-D-muramoyl-L-alanyl-D-glutamate + ADP + phosphate + H(+). It functions in the pathway cell wall biogenesis; peptidoglycan biosynthesis. Cell wall formation. Catalyzes the addition of glutamate to the nucleotide precursor UDP-N-acetylmuramoyl-L-alanine (UMA). This is UDP-N-acetylmuramoylalanine--D-glutamate ligase from Lacticaseibacillus paracasei (strain ATCC 334 / BCRC 17002 / CCUG 31169 / CIP 107868 / KCTC 3260 / NRRL B-441) (Lactobacillus paracasei).